Consider the following 238-residue polypeptide: ATP synthase subunit a (238 aa).

5 helical membrane passes run 18–38 (LTLL…VFWA), 76–96 (YSLL…LGLF), 114–134 (NLAF…IEGV), 166–186 (SLAI…GLIV), and 193–213 (VYWW…SVFI).

Belongs to the ATPase A chain family. F-type ATPases have 2 components, CF(1) - the catalytic core - and CF(0) - the membrane proton channel. CF(1) has five subunits: alpha(3), beta(3), gamma(1), delta(1), epsilon(1). CF(0) has three main subunits: a(1), b(2) and c(9-12). The alpha and beta chains form an alternating ring which encloses part of the gamma chain. CF(1) is attached to CF(0) by a central stalk formed by the gamma and epsilon chains, while a peripheral stalk is formed by the delta and b chains.

The protein localises to the cell membrane. Its function is as follows. Key component of the proton channel; it plays a direct role in the translocation of protons across the membrane. This Streptococcus pyogenes serotype M5 (strain Manfredo) protein is ATP synthase subunit a.